Reading from the N-terminus, the 427-residue chain is Enolase (427 aa).

Position 163 (Q163) interacts with (2R)-2-phosphoglycerate. The Proton donor role is filled by E205. Positions 242, 285, and 312 each coordinate Mg(2+). (2R)-2-phosphoglycerate is bound by residues K337, R366, S367, and K388. The active-site Proton acceptor is K337.

Belongs to the enolase family. Requires Mg(2+) as cofactor.

The protein localises to the cytoplasm. The protein resides in the secreted. Its subcellular location is the cell surface. The enzyme catalyses (2R)-2-phosphoglycerate = phosphoenolpyruvate + H2O. It participates in carbohydrate degradation; glycolysis; pyruvate from D-glyceraldehyde 3-phosphate: step 4/5. Its function is as follows. Catalyzes the reversible conversion of 2-phosphoglycerate (2-PG) into phosphoenolpyruvate (PEP). It is essential for the degradation of carbohydrates via glycolysis. The chain is Enolase from Burkholderia vietnamiensis (strain G4 / LMG 22486) (Burkholderia cepacia (strain R1808)).